A 103-amino-acid polypeptide reads, in one-letter code: ATP-dependent Clp protease adapter protein ClpS 1 (103 aa).

It belongs to the ClpS family. Binds to the N-terminal domain of the chaperone ClpA.

In terms of biological role, involved in the modulation of the specificity of the ClpAP-mediated ATP-dependent protein degradation. The chain is ATP-dependent Clp protease adapter protein ClpS 1 from Rhodopseudomonas palustris (strain ATCC BAA-98 / CGA009).